A 319-amino-acid polypeptide reads, in one-letter code: Aliphatic sulfonates import ATP-binding protein SsuB 1 (319 aa).

One can recognise an ABC transporter domain in the interval 63-282; sequence VTLSGVSKRF…ARASAAFAAL (220 aa). 95 to 102 contributes to the ATP binding site; that stretch reads GRSGCGKS.

This sequence belongs to the ABC transporter superfamily. Aliphatic sulfonates importer (TC 3.A.1.17.2) family. As to quaternary structure, the complex is composed of two ATP-binding proteins (SsuB), two transmembrane proteins (SsuC) and a solute-binding protein (SsuA).

It is found in the cell inner membrane. It catalyses the reaction ATP + H2O + aliphatic sulfonate-[sulfonate-binding protein]Side 1 = ADP + phosphate + aliphatic sulfonateSide 2 + [sulfonate-binding protein]Side 1.. Its function is as follows. Part of the ABC transporter complex SsuABC involved in aliphatic sulfonates import. Responsible for energy coupling to the transport system. The protein is Aliphatic sulfonates import ATP-binding protein SsuB 1 of Burkholderia cenocepacia (strain HI2424).